Here is a 321-residue protein sequence, read N- to C-terminus: tRNA(Ile)-lysidine synthase (321 aa).

30–35 contacts ATP; it reads SGGSDS.

It belongs to the tRNA(Ile)-lysidine synthase family.

It is found in the cytoplasm. The catalysed reaction is cytidine(34) in tRNA(Ile2) + L-lysine + ATP = lysidine(34) in tRNA(Ile2) + AMP + diphosphate + H(+). In terms of biological role, ligates lysine onto the cytidine present at position 34 of the AUA codon-specific tRNA(Ile) that contains the anticodon CAU, in an ATP-dependent manner. Cytidine is converted to lysidine, thus changing the amino acid specificity of the tRNA from methionine to isoleucine. This chain is tRNA(Ile)-lysidine synthase, found in Chlamydia trachomatis serovar A (strain ATCC VR-571B / DSM 19440 / HAR-13).